Here is a 177-residue protein sequence, read N- to C-terminus: Nucleoside triphosphate/diphosphate phosphatase (177 aa).

Arg23 serves as the catalytic Proton donor. Mg(2+)-binding residues include Asn87, Asp103, Asp105, Asp107, Asp120, and Glu123.

It belongs to the Ntdp family. Mg(2+) is required as a cofactor.

The catalysed reaction is a ribonucleoside 5'-triphosphate + H2O = a ribonucleoside 5'-diphosphate + phosphate + H(+). It catalyses the reaction a ribonucleoside 5'-diphosphate + H2O = a ribonucleoside 5'-phosphate + phosphate + H(+). Its function is as follows. Has nucleoside phosphatase activity towards nucleoside triphosphates and nucleoside diphosphates. The polypeptide is Nucleoside triphosphate/diphosphate phosphatase (Streptococcus equi subsp. zooepidemicus (strain MGCS10565)).